Reading from the N-terminus, the 344-residue chain is uncharacterized protein (344 aa).

The segment at 95–344 is disordered; that stretch reads TINPEDANED…TPAKKNSKGR (250 aa). Over residues 103–123 the composition is skewed to basic and acidic residues; the sequence is EDAKVKNSLKLEKEEGSDEKS. A compositionally biased stretch (acidic residues) spans 135–155; the sequence is SDDESDNSNDSEESEAEDSDQ. Residues 191–200 are compositionally biased toward low complexity; that stretch reads SAKNAKASKP. Over residues 244-259 the composition is skewed to acidic residues; the sequence is SEDEDSGSDNSEEESE. Over residues 265 to 276 the composition is skewed to basic residues; it reads ASSKKPPSKSSK. The span at 281-314 shows a compositional bias: acidic residues; the sequence is EDEDEDSGQSESEHSEEESNSDEDSGQSEEESEE. Basic residues predominate over residues 331–344; the sequence is TAKKTPAKKNSKGR.

This is an uncharacterized protein from Acanthamoeba polyphaga (Amoeba).